A 201-amino-acid chain; its full sequence is Recombination protein RecR (201 aa).

Residues Cys60–Cys75 form a C4-type zinc finger. In terms of domain architecture, Toprim spans Lys83 to Pro177.

The protein belongs to the RecR family.

May play a role in DNA repair. It seems to be involved in an RecBC-independent recombinational process of DNA repair. It may act with RecF and RecO. The sequence is that of Recombination protein RecR from Prochlorococcus marinus (strain MIT 9215).